The chain runs to 315 residues: Alpha- and gamma-adaptin-binding protein p34 (315 aa).

The tract at residues 197–233 (IGSADPCHPEQPHLPAADRTESLSDHRGGASNTTDAQ) is disordered. Positions 203-224 (CHPEQPHLPAADRTESLSDHRG) are enriched in basic and acidic residues. Residues Ser-310 and Ser-311 each carry the phosphoserine modification.

As to quaternary structure, associated with AP-1 and AP-2 complexes.

The protein resides in the cytoplasm. Its subcellular location is the cytosol. Its function is as follows. May be involved in endocytic recycling of growth factor receptors such as EGFR. The sequence is that of Alpha- and gamma-adaptin-binding protein p34 (AAGAB) from Pongo abelii (Sumatran orangutan).